A 227-amino-acid chain; its full sequence is Thymidylate kinase (227 aa).

16–23 (GIDGAGKT) serves as a coordination point for ATP.

The protein belongs to the thymidylate kinase family.

It carries out the reaction dTMP + ATP = dTDP + ADP. In terms of biological role, phosphorylation of dTMP to form dTDP in both de novo and salvage pathways of dTTP synthesis. The polypeptide is Thymidylate kinase (Xanthomonas oryzae pv. oryzae (strain MAFF 311018)).